The chain runs to 180 residues: ATP-dependent protease subunit HslV (180 aa).

Residue threonine 2 is part of the active site. The Na(+) site is built by glycine 157, cysteine 160, and serine 163.

The protein belongs to the peptidase T1B family. HslV subfamily. A double ring-shaped homohexamer of HslV is capped on each side by a ring-shaped HslU homohexamer. The assembly of the HslU/HslV complex is dependent on binding of ATP.

It localises to the cytoplasm. The enzyme catalyses ATP-dependent cleavage of peptide bonds with broad specificity.. Allosterically activated by HslU binding. Its function is as follows. Protease subunit of a proteasome-like degradation complex believed to be a general protein degrading machinery. This Wigglesworthia glossinidia brevipalpis protein is ATP-dependent protease subunit HslV.